Here is a 305-residue protein sequence, read N- to C-terminus: Olfactory receptor 4F4 (305 aa).

Over 1 to 18 the chain is Extracellular; the sequence is MVTEFIFLGLSDSQELQT. A helical membrane pass occupies residues 19–42; that stretch reads FLFMLFFVFYGGIVFGNLLIVITV. The Cytoplasmic portion of the chain corresponds to 43–50; it reads VSDSHLHS. A helical transmembrane segment spans residues 51–72; that stretch reads PMYFLLANLSLIDLSLSSVTAP. Over 73 to 93 the chain is Extracellular; that stretch reads KMITDFFSQRKVISFKGCLVQ. Cysteines 90 and 182 form a disulfide. A helical membrane pass occupies residues 94–113; sequence IFLLHFFGGSEMVILIAMGF. Residues 114–132 are Cytoplasmic-facing; it reads DRYIAICKPLHYTTIMCGN. The chain crosses the membrane as a helical span at residues 133 to 151; that stretch reads ACVGIMAVAWGIGFLHSVS. Residues 152–188 lie on the Extracellular side of the membrane; it reads QLAFAVHLPFCGPNEVDSFYCDLPRVIKLACTDTYRL. A helical membrane pass occupies residues 189–212; the sequence is DIMVIANSGVLTVCSFVLLIISYT. Residues 213 to 228 are Cytoplasmic-facing; sequence IILMTIQHCPLDKSSK. Residues 229–251 traverse the membrane as a helical segment; it reads ALSTLTAHITVVLLFFGPCVFIY. Residues 252-262 lie on the Extracellular side of the membrane; sequence AWPFPIKSLDK. A helical membrane pass occupies residues 263 to 282; that stretch reads FLAVFYSVITPLLNPIIYTL. Topologically, residues 283-305 are cytoplasmic; that stretch reads RNKDMKTAIRRLRKWDAHSSVKF.

Belongs to the G-protein coupled receptor 1 family.

The protein localises to the cell membrane. Functionally, odorant receptor. This is Olfactory receptor 4F4 (OR4F4) from Homo sapiens (Human).